The following is a 702-amino-acid chain: Phosphoglycerol transferase I (702 aa).

3 helical membrane-spanning segments follow: residues 2-22 (HWIL…SPRL), 71-91 (FSGY…PLML), and 103-123 (GGAV…VSPV).

Belongs to the OpgB family.

The protein localises to the cell inner membrane. The enzyme catalyses a phosphatidylglycerol + a membrane-derived-oligosaccharide D-glucose = a 1,2-diacyl-sn-glycerol + a membrane-derived-oligosaccharide 6-(glycerophospho)-D-glucose.. It participates in glycan metabolism; osmoregulated periplasmic glucan (OPG) biosynthesis. Functionally, transfers a phosphoglycerol residue from phosphatidylglycerol to the membrane-bound nascent glucan backbones. This is Phosphoglycerol transferase I from Xanthomonas campestris pv. campestris (strain B100).